The sequence spans 355 residues: Uroporphyrinogen decarboxylase (355 aa).

Substrate contacts are provided by residues R27–R31, F46, D78, Y155, S210, and H328.

The protein belongs to the uroporphyrinogen decarboxylase family. Homodimer.

It is found in the cytoplasm. The enzyme catalyses uroporphyrinogen III + 4 H(+) = coproporphyrinogen III + 4 CO2. It participates in porphyrin-containing compound metabolism; protoporphyrin-IX biosynthesis; coproporphyrinogen-III from 5-aminolevulinate: step 4/4. Its function is as follows. Catalyzes the decarboxylation of four acetate groups of uroporphyrinogen-III to yield coproporphyrinogen-III. The chain is Uroporphyrinogen decarboxylase from Pseudomonas aeruginosa (strain ATCC 15692 / DSM 22644 / CIP 104116 / JCM 14847 / LMG 12228 / 1C / PRS 101 / PAO1).